The chain runs to 207 residues: MKTTINIATPTLKKPSKEANLVASIYGLLFVCGAKGITLRELIRIFKKAGIEKVKLALLALERKLADDEQSGVELKKFGNSFSLVTKPIIKDYLHLLLAHKVKNPLNSKAMEVLAIIAYNQPCTRPRINEIRGVDSFQIVDDLIAKELIVELGRTDKPGRPFIYEVSAKFYDLFGIDSLDQLPKIEHFDLDKFKQGSFFDSNRYGDE.

Belongs to the ScpB family. As to quaternary structure, homodimer. Homodimerization may be required to stabilize the binding of ScpA to the Smc head domains. Component of a cohesin-like complex composed of ScpA, ScpB and the Smc homodimer, in which ScpA and ScpB bind to the head domain of Smc. The presence of the three proteins is required for the association of the complex with DNA.

Its subcellular location is the cytoplasm. In terms of biological role, participates in chromosomal partition during cell division. May act via the formation of a condensin-like complex containing Smc and ScpA that pull DNA away from mid-cell into both cell halves. This Mycoplasma genitalium (strain ATCC 33530 / DSM 19775 / NCTC 10195 / G37) (Mycoplasmoides genitalium) protein is Segregation and condensation protein B.